The primary structure comprises 564 residues: MEQRIKFPRSEKVYLSGKLFPEIRVGMRKVEQVPSTTFEGEKKVITPNPHVYIYDTSGPFSDPDIEIDLKKGLPRLREEWILNRGDVEQLPEISSEYGRMRRDDGSLDHLRFEHIALPYRAKAGRHITQMAYAKQGIVTPEMEYVAIRENMNCEELGIETHITPEFVRQEIAEGRAVLPANINHPEAEPMIIGRNFLVKINTNIGNSATTSSIDEEVEKAMWSCKWGGDTLMDLSTGENIHETREWIIRNCPVPVGTVPIYQALEKVNGKVEDLTWELYRDTLIEQCEQGVDYFTIHAGIRRHNVHLAEKRLCGIVSRGGSIMSKWCLVHDRESFLYEHFDDICDILAQYDVAVSLGDGLRPGSTHDANDEAQFAELDTMGELVVRAWEKNVQAFIEGPGHVPMHKIRENMERQIEKCHNAPFYTLGPLVTDIAPGYDHITSAIGAAQIGWLGTAMLCYVTPKEHLALPDKEDVRVGVITYKIAAHAADLAKGHPGAQVRDNALSKARYEFRWKDQFDLSLDPERAFSYFHAGRHTDGEYCTMCGPNFCAMRLSRDLKKTQKQK.

Substrate is bound by residues Asn203, Met232, Tyr261, His297, 317–319 (SRG), 358–361 (DGLR), and Glu397. A Zn(2+)-binding site is contributed by His401. Tyr424 is a substrate binding site. Position 465 (His465) interacts with Zn(2+). [4Fe-4S] cluster contacts are provided by Cys541, Cys544, and Cys549.

It belongs to the ThiC family. [4Fe-4S] cluster is required as a cofactor.

It carries out the reaction 5-amino-1-(5-phospho-beta-D-ribosyl)imidazole + S-adenosyl-L-methionine = 4-amino-2-methyl-5-(phosphooxymethyl)pyrimidine + CO + 5'-deoxyadenosine + formate + L-methionine + 3 H(+). Its pathway is cofactor biosynthesis; thiamine diphosphate biosynthesis. Functionally, catalyzes the synthesis of the hydroxymethylpyrimidine phosphate (HMP-P) moiety of thiamine from aminoimidazole ribotide (AIR) in a radical S-adenosyl-L-methionine (SAM)-dependent reaction. This chain is Phosphomethylpyrimidine synthase, found in Bacteroides fragilis (strain ATCC 25285 / DSM 2151 / CCUG 4856 / JCM 11019 / LMG 10263 / NCTC 9343 / Onslow / VPI 2553 / EN-2).